The following is a 576-amino-acid chain: Apolipoprotein N-acyltransferase 1 (576 aa).

7 helical membrane-spanning segments follow: residues 15-35 (LILC…FSFF), 38-58 (GVFA…TSIW), 60-80 (AFLW…YWIP), 92-112 (FVSI…FFLF), 128-148 (YILL…FQIF), 168-188 (ICGV…FLIL), and 204-224 (IASL…IGYI). The region spanning 236–538 (LSVLMIQPDT…TGTRAFSIRL (303 aa)) is the CN hydrolase domain. Residue Glu-285 is the Proton acceptor of the active site. The active site involves Lys-355. Residue Cys-446 is the Nucleophile of the active site. The chain crosses the membrane as a helical span at residues 549 to 569 (FGNSFLWIFCILILISRLIFV).

The protein belongs to the CN hydrolase family. Apolipoprotein N-acyltransferase subfamily.

It localises to the cell inner membrane. It catalyses the reaction N-terminal S-1,2-diacyl-sn-glyceryl-L-cysteinyl-[lipoprotein] + a glycerophospholipid = N-acyl-S-1,2-diacyl-sn-glyceryl-L-cysteinyl-[lipoprotein] + a 2-acyl-sn-glycero-3-phospholipid + H(+). The protein operates within protein modification; lipoprotein biosynthesis (N-acyl transfer). Its function is as follows. Catalyzes the phospholipid dependent N-acylation of the N-terminal cysteine of apolipoprotein, the last step in lipoprotein maturation. This Leptospira interrogans serogroup Icterohaemorrhagiae serovar copenhageni (strain Fiocruz L1-130) protein is Apolipoprotein N-acyltransferase 1.